The sequence spans 89 residues: Small ribosomal subunit protein uS17 (89 aa).

The protein belongs to the universal ribosomal protein uS17 family. As to quaternary structure, part of the 30S ribosomal subunit.

In terms of biological role, one of the primary rRNA binding proteins, it binds specifically to the 5'-end of 16S ribosomal RNA. This is Small ribosomal subunit protein uS17 from Xylella fastidiosa (strain 9a5c).